We begin with the raw amino-acid sequence, 1495 residues long: Terminal uridylyltransferase 7 (1495 aa).

Disordered stretches follow at residues 1–30 (MGDTAKPYFVKRTKDRGTMDDDDFRRGHPQ), 43–69 (HGSKMEKGLQKKKITPGNYGNTPRKGP), 89–140 (WMND…EDGY), and 162–205 (LETT…PVID). Residues 15–26 (DRGTMDDDDFRR) show a composition bias toward basic and acidic residues. Phosphothreonine occurs at positions 57 and 64. Basic and acidic residues-rich tracts occupy residues 92–118 (DSHKDQSKRWLSDEHTGNSDNWREFKP) and 128–140 (QRKDSFQENEDGY). Ser132 and Ser172 each carry phosphoserine. Positions 178 to 187 (QRSRPRKPRK) are enriched in basic residues. The Matrin-type zinc finger occupies 244–274 (YTCRLCDVLIESIAFAHKHIKEKRHKKNIKE). The region spanning 551–600 (VGQLWVELLRFYALEFNLADLVISIRVKELVSRELKDWPKKRIAIEDPYS) is the PAP-associated 1 domain. Ser600 carries the phosphoserine modification. A compositionally biased stretch (basic and acidic residues) spans 734–756 (DDYKGDKVYHPETGRKNEKEKVG). 2 disordered regions span residues 734 to 757 (DDYKGDKVYHPETGRKNEKEKVGR) and 831 to 898 (THSV…EDDE). Residues 831–841 (THSVQGQTSEM) are compositionally biased toward polar residues. Acidic residues-rich tracts occupy residues 843–859 (PSDEEEEDDEEEEEEEE), 868–880 (EDEDGMANEDELD), and 887–898 (GDEDALSEEDDE). A Phosphoserine modification is found at Ser844. A phosphoserine mark is found at Ser893 and Ser939. The segment at 951-1495 (SKLIFTKGKS…ASAKRTQQES (545 aa)) is sufficient for monouridylation activity. Residues 963 to 980 (VVCSLCKREGHLKKDCPE) form a CCHC-type 1 zinc finger. Residues 1047 to 1050 (SSKN), 1057 to 1060 (SDLD), Asn1130, Lys1152, 1170 to 1174 (SYAYT), and His1286 each bind UTP. The Mg(2+) site is built by Asp1058 and Asp1060. The 54-residue stretch at 1233–1286 (SVGQLWLGLLRFYTEEFDFKEHVISIRRKSLLTTFKKQWTSKYIVIEDPFDLNH) folds into the PAP-associated 2 domain. The segment at 1345–1362 (RCCRICGKIGHFMKDCPM) adopts a CCHC-type 2 zinc-finger fold. Disordered regions lie at residues 1367–1424 (RRRR…MRAA) and 1466–1495 (CPQFKGSSGSLSSKYMTQGKASAKRTQQES). The segment covering 1381 to 1410 (PENKEKRSKEDKEIHNKYTEREVSTKEDKP) has biased composition (basic and acidic residues). The CCHC-type 3 zinc finger occupies 1451-1468 (KRCFICGREGHIKKECPQ). Residues 1470-1485 (KGSSGSLSSKYMTQGK) show a composition bias toward polar residues.

Belongs to the DNA polymerase type-B-like family. Interacts with MOV10; the interaction is RNA-dependent. Mg(2+) is required as a cofactor. The cofactor is Mn(2+).

It localises to the cytoplasm. It carries out the reaction RNA(n) + UTP = RNA(n)-3'-uridine ribonucleotide + diphosphate. Functionally, uridylyltransferase that mediates the terminal uridylation of mRNAs with short (less than 25 nucleotides) poly(A) tails, hence facilitating global mRNA decay. Essential for both oocyte maturation and fertility. Through 3' terminal uridylation of mRNA, sculpts, with TUT7, the maternal transcriptome by eliminating transcripts during oocyte growth. Involved in microRNA (miRNA)-induced gene silencing through uridylation of deadenylated miRNA targets. Also functions as an integral regulator of microRNA biogenesiS using 3 different uridylation mechanisms. Acts as a suppressor of miRNA biogenesis by mediating the terminal uridylation of some miRNA precursors, including that of let-7 (pre-let-7). Uridylated pre-let-7 RNA is not processed by Dicer and undergo degradation. Pre-let-7 uridylation is strongly enhanced in the presence of LIN28A. In the absence of LIN28A, TUT7 and TUT4 monouridylate group II pre-miRNAs, which includes most of pre-let7 members, that shapes an optimal 3' end overhang for efficient processing. Add oligo-U tails to truncated pre-miRNAS with a 5' overhang which may promote rapid degradation of non-functional pre-miRNA species. Does not play a role in replication-dependent histone mRNA degradation. Due to functional redundancy between TUT4 and TUT7, the identification of the specific role of each of these proteins is difficult. TUT4 and TUT7 restrict retrotransposition of long interspersed element-1 (LINE-1) in cooperation with MOV10 counteracting the RNA chaperonne activity of L1RE1. TUT7 uridylates LINE-1 mRNAs in the cytoplasm which inhibits initiation of reverse transcription once in the nucleus, whereas uridylation by TUT4 destabilizes mRNAs in cytoplasmic ribonucleoprotein granules. This is Terminal uridylyltransferase 7 from Homo sapiens (Human).